We begin with the raw amino-acid sequence, 528 residues long: 4-nitrophenol 4-monooxygenase/4-nitrocatechol 2-monooxygenase, oxygenase component (528 aa).

100–104 (RPPAG) is a substrate binding site. FAD-binding positions include 153 to 155 (PMF), 159 to 162 (QFDR), and Thr-194. Substrate is bound at residue 205 to 206 (GN). Residue 461–464 (TMQR) participates in FAD binding.

Belongs to the FADH(2)-utilizing monooxygenase family. As to quaternary structure, the 4-NP/4-NCA monooxygenase is composed of an oxygenase component NpcA and a reductase component NpcB. It depends on FAD as a cofactor.

It carries out the reaction 4-nitrophenol + NADH + O2 + H(+) = 4-nitrocatechol + NAD(+) + H2O. The enzyme catalyses 4-nitrocatechol + NADPH + O2 = 2-hydroxy-1,4-benzoquinone + nitrite + NADP(+) + H2O. It catalyses the reaction 4-nitrocatechol + NADH + O2 = 2-hydroxy-1,4-benzoquinone + nitrite + NAD(+) + H2O. It functions in the pathway aromatic compound metabolism. It participates in xenobiotic degradation. Its activity is regulated as follows. Inhibited by methimazole. Involved in the degradation of para-nitrophenol (4-NP). Catalyzes both the initial hydroxylation of 4-NP to produce 4-nitrocatechol (4-NCA) and the subsequent oxidative release of the nitro group from 4-NCA to produce 2-hydroxy-1,4-benzoquinone. It can also use 4-nitroresorcinol as substrate with a rate of nitrite release similar to that observed with the two physiological substrates, 4-PN and 4-NCA. The protein is 4-nitrophenol 4-monooxygenase/4-nitrocatechol 2-monooxygenase, oxygenase component (npcA) of Rhodococcus opacus (Nocardia opaca).